We begin with the raw amino-acid sequence, 91 residues long: Alpha-latrotoxin associated low molecular weight protein SGV150-311 (91 aa).

The N-terminal stretch at 1-18 (MNVLHFLILLMSVVSVFC) is a signal peptide.

The protein belongs to the arthropod CHH/MIH/GIH/VIH hormone family. Expressed by the venom gland.

The protein localises to the secreted. Its function is as follows. May increase the toxicity of alpha-latrotoxin and/or other venom components. Is non-toxic to mice and to the cockroach Periplaneta americana. This is Alpha-latrotoxin associated low molecular weight protein SGV150-311 from Steatoda grossa (False black widow).